The following is a 637-amino-acid chain: Biosynthetic arginine decarboxylase (637 aa).

Residue Lys101 is modified to N6-(pyridoxal phosphate)lysine. 286–296 contributes to the substrate binding site; sequence FDVGGGLAVDY.

It belongs to the Orn/Lys/Arg decarboxylase class-II family. SpeA subfamily. It depends on Mg(2+) as a cofactor. Requires pyridoxal 5'-phosphate as cofactor.

It carries out the reaction L-arginine + H(+) = agmatine + CO2. Its pathway is amine and polyamine biosynthesis; agmatine biosynthesis; agmatine from L-arginine: step 1/1. Catalyzes the biosynthesis of agmatine from arginine. The protein is Biosynthetic arginine decarboxylase of Shewanella sp. (strain ANA-3).